Consider the following 250-residue polypeptide: Ribosomal RNA small subunit methyltransferase J (250 aa).

S-adenosyl-L-methionine-binding positions include 101 to 102 (RD), 117 to 118 (ER), 153 to 154 (SS), and D171.

Belongs to the methyltransferase superfamily. RsmJ family.

Its subcellular location is the cytoplasm. The enzyme catalyses guanosine(1516) in 16S rRNA + S-adenosyl-L-methionine = N(2)-methylguanosine(1516) in 16S rRNA + S-adenosyl-L-homocysteine + H(+). Its function is as follows. Specifically methylates the guanosine in position 1516 of 16S rRNA. This chain is Ribosomal RNA small subunit methyltransferase J, found in Escherichia coli (strain SMS-3-5 / SECEC).